We begin with the raw amino-acid sequence, 431 residues long: Histidinol dehydrogenase 1 (431 aa).

NAD(+)-binding residues include Y127, Q188, and N211. The substrate site is built by S234, Q256, and H259. Residues Q256 and H259 each coordinate Zn(2+). Catalysis depends on proton acceptor residues E324 and H325. Substrate is bound by residues H325, D358, E412, and H417. D358 provides a ligand contact to Zn(2+). H417 is a binding site for Zn(2+).

It belongs to the histidinol dehydrogenase family. The cofactor is Zn(2+).

The enzyme catalyses L-histidinol + 2 NAD(+) + H2O = L-histidine + 2 NADH + 3 H(+). The protein operates within amino-acid biosynthesis; L-histidine biosynthesis; L-histidine from 5-phospho-alpha-D-ribose 1-diphosphate: step 9/9. Catalyzes the sequential NAD-dependent oxidations of L-histidinol to L-histidinaldehyde and then to L-histidine. The protein is Histidinol dehydrogenase 1 (hisD1) of Nostoc sp. (strain PCC 7120 / SAG 25.82 / UTEX 2576).